The chain runs to 200 residues: Holliday junction branch migration complex subunit RuvA (200 aa).

Residues Met-1–His-64 are domain I. The domain II stretch occupies residues Asn-65–Pro-143. Residues Ser-133–Gln-152 are disordered. The interval Glu-144–Ser-148 is flexible linker. Residues Ser-149–Thr-200 form a domain III region.

This sequence belongs to the RuvA family. As to quaternary structure, homotetramer. Forms an RuvA(8)-RuvB(12)-Holliday junction (HJ) complex. HJ DNA is sandwiched between 2 RuvA tetramers; dsDNA enters through RuvA and exits via RuvB. An RuvB hexamer assembles on each DNA strand where it exits the tetramer. Each RuvB hexamer is contacted by two RuvA subunits (via domain III) on 2 adjacent RuvB subunits; this complex drives branch migration. In the full resolvosome a probable DNA-RuvA(4)-RuvB(12)-RuvC(2) complex forms which resolves the HJ.

Its subcellular location is the cytoplasm. Functionally, the RuvA-RuvB-RuvC complex processes Holliday junction (HJ) DNA during genetic recombination and DNA repair, while the RuvA-RuvB complex plays an important role in the rescue of blocked DNA replication forks via replication fork reversal (RFR). RuvA specifically binds to HJ cruciform DNA, conferring on it an open structure. The RuvB hexamer acts as an ATP-dependent pump, pulling dsDNA into and through the RuvAB complex. HJ branch migration allows RuvC to scan DNA until it finds its consensus sequence, where it cleaves and resolves the cruciform DNA. In Coxiella burnetii (strain Dugway 5J108-111), this protein is Holliday junction branch migration complex subunit RuvA.